The chain runs to 346 residues: UDP-3-O-acylglucosamine N-acyltransferase (346 aa).

Histidine 253 (proton acceptor) is an active-site residue.

Belongs to the transferase hexapeptide repeat family. LpxD subfamily. Homotrimer.

It carries out the reaction a UDP-3-O-[(3R)-3-hydroxyacyl]-alpha-D-glucosamine + a (3R)-hydroxyacyl-[ACP] = a UDP-2-N,3-O-bis[(3R)-3-hydroxyacyl]-alpha-D-glucosamine + holo-[ACP] + H(+). Its pathway is bacterial outer membrane biogenesis; LPS lipid A biosynthesis. In terms of biological role, catalyzes the N-acylation of UDP-3-O-acylglucosamine using 3-hydroxyacyl-ACP as the acyl donor. Is involved in the biosynthesis of lipid A, a phosphorylated glycolipid that anchors the lipopolysaccharide to the outer membrane of the cell. The sequence is that of UDP-3-O-acylglucosamine N-acyltransferase from Rickettsia typhi (strain ATCC VR-144 / Wilmington).